The following is a 157-amino-acid chain: Small ribosomal subunit protein uS7cz/uS7cy (157 aa).

The protein belongs to the universal ribosomal protein uS7 family. In terms of assembly, part of the 30S ribosomal subunit.

It localises to the plastid. It is found in the chloroplast. Functionally, one of the primary rRNA binding proteins, it binds directly to 16S rRNA where it nucleates assembly of the head domain of the 30S subunit. The polypeptide is Small ribosomal subunit protein uS7cz/uS7cy (rps7-A) (Gnetum parvifolium (Small-leaved jointfir)).